Consider the following 375-residue polypeptide: Queuine tRNA-ribosyltransferase (375 aa).

The Proton acceptor role is filled by aspartate 89. Residues 89–93 (DSGGF), aspartate 143, glutamine 187, and glycine 214 contribute to the substrate site. The interval 245-251 (GVGKPED) is RNA binding. Aspartate 264 acts as the Nucleophile in catalysis. The interval 269–273 (TRNAR) is RNA binding; important for wobble base 34 recognition. Residues cysteine 302, cysteine 304, cysteine 307, and histidine 333 each coordinate Zn(2+).

It belongs to the queuine tRNA-ribosyltransferase family. In terms of assembly, homodimer. Within each dimer, one monomer is responsible for RNA recognition and catalysis, while the other monomer binds to the replacement base PreQ1. Zn(2+) is required as a cofactor.

The catalysed reaction is 7-aminomethyl-7-carbaguanine + guanosine(34) in tRNA = 7-aminomethyl-7-carbaguanosine(34) in tRNA + guanine. Its pathway is tRNA modification; tRNA-queuosine biosynthesis. Its function is as follows. Catalyzes the base-exchange of a guanine (G) residue with the queuine precursor 7-aminomethyl-7-deazaguanine (PreQ1) at position 34 (anticodon wobble position) in tRNAs with GU(N) anticodons (tRNA-Asp, -Asn, -His and -Tyr). Catalysis occurs through a double-displacement mechanism. The nucleophile active site attacks the C1' of nucleotide 34 to detach the guanine base from the RNA, forming a covalent enzyme-RNA intermediate. The proton acceptor active site deprotonates the incoming PreQ1, allowing a nucleophilic attack on the C1' of the ribose to form the product. After dissociation, two additional enzymatic reactions on the tRNA convert PreQ1 to queuine (Q), resulting in the hypermodified nucleoside queuosine (7-(((4,5-cis-dihydroxy-2-cyclopenten-1-yl)amino)methyl)-7-deazaguanosine). The protein is Queuine tRNA-ribosyltransferase of Shigella flexneri serotype 5b (strain 8401).